A 147-amino-acid polypeptide reads, in one-letter code: Small ribosomal subunit protein uS12 (147 aa).

The protein belongs to the universal ribosomal protein uS12 family. As to quaternary structure, part of the 30S ribosomal subunit.

In terms of biological role, with S4 and S5 plays an important role in translational accuracy. Located at the interface of the 30S and 50S subunits. This Sulfurisphaera tokodaii (strain DSM 16993 / JCM 10545 / NBRC 100140 / 7) (Sulfolobus tokodaii) protein is Small ribosomal subunit protein uS12.